Consider the following 514-residue polypeptide: F-box-like/WD repeat-containing protein TBL1XR1 (514 aa).

S2 bears the N-acetylserine mark. The region spanning 4 to 36 (SSDEVNFLVYRYLQESGFSHSAFTFGIESHISQ) is the LisH domain. In terms of domain architecture, F-box-like spans 41 to 86 (GALVPPAALISIIQKGLQYVEAEVSINEDGTLFDGRPIESLSLIDA). Position 102 is an N6-acetyllysine (K102). S119 is modified (phosphoserine). Low complexity predominate over residues 120–135 (QQGSAKNGENTANGEE). Residues 120-139 (QQGSAKNGENTANGEENGAH) are disordered. 8 WD repeats span residues 167–206 (GHES…TSGS), 223–262 (PSNK…ASTL), 264–303 (QHKG…AKQQ), 306–344 (FHSA…PIKT), 347–386 (GHTN…CVHD), 389–437 (AHNK…CIHT), 440–479 (KHQE…LVHS), and 481–513 (RGTG…LDLR). A Glycyl lysine isopeptide (Lys-Gly) (interchain with G-Cter in SUMO2) cross-link involves residue K277.

The protein belongs to the WD repeat EBI family. Component of the N-Cor repressor complex, at least composed of NCOR1, NCOR2, HDAC3, TBL1X, TBL1XR1, CORO2A and GPS2. Probable component of some E3 ubiquitin ligase complex. Interacts with histones H2B and H4. Interacts with MECP2; bridges interaction between MECP2 and NCOR1. Interacts with USP44. In terms of tissue distribution, widely expressed including the pituitary, hypothalamus, white and brown adipose tissue, muscle and liver.

It is found in the nucleus. F-box-like protein involved in the recruitment of the ubiquitin/19S proteasome complex to nuclear receptor-regulated transcription units. Plays an essential role in transcription activation mediated by nuclear receptors. Probably acts as integral component of the N-Cor corepressor complex that mediates the recruitment of the 19S proteasome complex, leading to the subsequent proteasomal degradation of N-Cor complex, thereby allowing cofactor exchange, and transcription activation. This chain is F-box-like/WD repeat-containing protein TBL1XR1 (TBL1XR1), found in Homo sapiens (Human).